The following is a 218-amino-acid chain: YlmG homolog protein 1-2, chloroplastic (218 aa).

The transit peptide at 1–83 directs the protein to the chloroplast; that stretch reads MASFTTNSLA…TRSITTLVLL (83 aa). A run of 2 helical transmembrane segments spans residues 133 to 153 and 187 to 207; these read LTVV…VLMV and IIPP…AVLG.

This sequence belongs to the YggT family.

It is found in the plastid. It localises to the chloroplast thylakoid membrane. Not required for the biogenesis and accumulation of native cytochrome b6 in the thylakoid membrane. Not functionally involved in the pathway for covalent binding of the c-type heme to cytochrome b6. This is YlmG homolog protein 1-2, chloroplastic from Arabidopsis thaliana (Mouse-ear cress).